Here is a 696-residue protein sequence, read N- to C-terminus: Translation initiation factor IF-2 (696 aa).

The 175-residue stretch at 187 to 361 (ERPPVVTVMG…EMQEIKGIPD (175 aa)) folds into the tr-type G domain. Residues 196–203 (GHVDHGKT) form a G1 region. Residue 196 to 203 (GHVDHGKT) participates in GTP binding. The tract at residues 221–225 (GITQS) is G2. The segment at 242–245 (DTPG) is G3. GTP-binding positions include 242–246 (DTPGH) and 296–299 (NKID). Positions 296 to 299 (NKID) are G4. The segment at 333–335 (SAK) is G5.

Belongs to the TRAFAC class translation factor GTPase superfamily. Classic translation factor GTPase family. IF-2 subfamily.

It is found in the cytoplasm. One of the essential components for the initiation of protein synthesis. Protects formylmethionyl-tRNA from spontaneous hydrolysis and promotes its binding to the 30S ribosomal subunits. Also involved in the hydrolysis of GTP during the formation of the 70S ribosomal complex. The protein is Translation initiation factor IF-2 of Thermosipho africanus (strain TCF52B).